Here is a 95-residue protein sequence, read N- to C-terminus: YcgL domain-containing protein Sden_1630 (95 aa).

The YcgL domain occupies 1–85 (MICTVYKSRR…PKANLLEEHK (85 aa)).

The polypeptide is YcgL domain-containing protein Sden_1630 (Shewanella denitrificans (strain OS217 / ATCC BAA-1090 / DSM 15013)).